We begin with the raw amino-acid sequence, 309 residues long: Calcium homeostasis modulator protein 5 (309 aa).

Residues 1–15 (MDAFQGILKFFLNQK) lie on the Cytoplasmic side of the membrane. Positions 15, 32, and 37 each coordinate a 1,2-diacyl-sn-glycero-3-phosphate. The helical transmembrane segment at 16–37 (TVIGYSFMALLTVGSERLFSVV) threads the bilayer. Residues 38–45 (AFKCPCST) are Extracellular-facing. Intrachain disulfides connect C41/C127, C43/C158, and C142/C149. A helical transmembrane segment spans residues 46-70 (ENMTYGLVFLFAPAWVLLILGFFLN). At 71 to 99 (NRSWRLFTGCCVNPRKIFPRGHSCRFFYV) the chain is on the cytoplasmic side. Residues 100–129 (LGQITLSSLVAPVMWLSVALLNGTFYECAM) traverse the membrane as a helical segment. Residues Q102 and N121 each contribute to the a 1,2-diacyl-sn-glycero-3-phosphate site. Residues 130-174 (SGTRSSGLLELICKGKPKECWEELHKVSCGKTSMLPTVNEELKLS) are Extracellular-facing. Residues 175–200 (LQAQSQILGWCLICSASFFSLLTTCY) form a helical membrane-spanning segment. Residues 201-309 (ARCRSKVSYL…MVLVGTAHNM (109 aa)) lie on the Cytoplasmic side of the membrane. Position 202 (R202) interacts with a 1,2-diacyl-sn-glycero-3-phosphate.

This sequence belongs to the CALHM family. In terms of assembly, oligomerizes to form undecameric cone-shaped channels.

The protein resides in the membrane. Its function is as follows. May assemble to form large pore channels with gating and ion conductance likely regulated by membrane lipids. This chain is Calcium homeostasis modulator protein 5, found in Homo sapiens (Human).